Reading from the N-terminus, the 202-residue chain is Dephospho-CoA kinase (202 aa).

The DPCK domain occupies 3-201; the sequence is AIGLTGGIGS…QRYLGFAAAA (199 aa). Position 11 to 16 (11 to 16) interacts with ATP; that stretch reads GSGKTT.

This sequence belongs to the CoaE family.

Its subcellular location is the cytoplasm. It carries out the reaction 3'-dephospho-CoA + ATP = ADP + CoA + H(+). It participates in cofactor biosynthesis; coenzyme A biosynthesis; CoA from (R)-pantothenate: step 5/5. Functionally, catalyzes the phosphorylation of the 3'-hydroxyl group of dephosphocoenzyme A to form coenzyme A. This is Dephospho-CoA kinase from Burkholderia lata (strain ATCC 17760 / DSM 23089 / LMG 22485 / NCIMB 9086 / R18194 / 383).